The following is a 316-amino-acid chain: Protein lifeguard 2 (316 aa).

The segment at 1–46 (MTQGKLSVANKAPGTEGQQQANGEKKETPAVPSAPPSYEEATSGEG) is disordered. Helical transmembrane passes span 106-126 (VYTI…LFTF), 138-158 (PGWY…LACC), and 165-185 (FPWN…LTGM). N191 carries an N-linked (GlcNAc...) asparagine glycan. The next 4 helical transmembrane spans lie at 194-214 (SVLL…VFSF), 225-245 (GVLF…AILL), 251-271 (PWLH…FLAF), and 290-310 (IFGA…FLQL).

It belongs to the BI1 family. LFG subfamily. In terms of assembly, interacts with FAS/TNFRSF6 and BAX.

The protein localises to the cell membrane. Its subcellular location is the membrane raft. It localises to the postsynaptic cell membrane. Antiapoptotic protein which protects cells uniquely from Fas-induced apoptosis. Regulates Fas-mediated apoptosis in neurons by interfering with caspase-8 activation. Plays a role in cerebellar development by affecting cerebellar size, internal granular layer (IGL) thickness, and Purkinje cell (PC) development. This Bos taurus (Bovine) protein is Protein lifeguard 2 (FAIM2).